Here is a 401-residue protein sequence, read N- to C-terminus: Probable cysteine desulfurase (401 aa).

At Lys-223 the chain carries N6-(pyridoxal phosphate)lysine.

It belongs to the class-V pyridoxal-phosphate-dependent aminotransferase family. Csd subfamily. Pyridoxal 5'-phosphate serves as cofactor.

It catalyses the reaction (sulfur carrier)-H + L-cysteine = (sulfur carrier)-SH + L-alanine. Functionally, catalyzes the removal of elemental sulfur and selenium atoms from L-cysteine, L-cystine, L-selenocysteine, and L-selenocystine to produce L-alanine. In Pseudomonas aeruginosa (strain ATCC 15692 / DSM 22644 / CIP 104116 / JCM 14847 / LMG 12228 / 1C / PRS 101 / PAO1), this protein is Probable cysteine desulfurase (csd).